A 251-amino-acid chain; its full sequence is uncharacterized protein (251 aa).

2 disordered regions span residues 1–92 (MGRP…PGSA) and 137–251 (KPTP…LRTH). Low complexity predominate over residues 69–92 (AEGAPALLGGSPSSGSPGHPPGSA). Positions 155–172 (SESSWQLPQLPAGSTSGS) are enriched in polar residues.

This is an uncharacterized protein from Homo sapiens (Human).